The sequence spans 1769 residues: MASITQLFDDLCEALLPAAQARPGQRSVNRKRAKRSLKRVAYNALFANLFQEDTHQRQPDSSKLPVKNKVLMLSFDLRVGGLGPEADRLEELVEKLEAAPDCPFVEVASVLDLLVQLAGSGPPQVLRRKRDYFFNNKHAGRNIPYSGYDCYDLSVFEMDVRSFISGEENLCHHTVQEALQVMEAAPGTGLPTVGLFSIGDSCGDRFERDTRVSLFGALVHSRTYDMDVRLDLPPVPDSADFSGLAIKVPQIVDQWEDEGFQSASNLTPDSQSEPSMTPDLDLWEAVLTYEASKRRCWERIGCPPGHREEPYLTEAGRDAFDRFCRLRHGELQALSGGLLQAPKPVLVEESELVKDSLNVLLGVVSATFSLCRPTQAFVVEPGVHVSGASPESISSILSEVAEYGTCYTRLSHFSLQPVVGSLCSRGLVFQAFTSGLRRYLQYYRACVLSTPPTLSLLTIGFLFKKLGRQLRYLAELCGVGTVSLATSGEPRAVFPTGVKLLSYLYQEALDNCSNEHYPVLLSLLKTSCEPYTRFIHDWVYSGVFRDVYGEFMIQVNHEYLSFRDKFYWTHGYVLISKEVEDCVPVFLKHIAHDVYVCGKTINLLKLCCPRHYLCWSDVPVPRISVIFSLEELKEIEKDCAVYVGRMERVARHSCISKEEKELRMEIAKQELIVHAREAASRVLSELSDRQMAEQIAQDTRKREQFQRLKEQFVKDQERRLAARQEELDDDFSYARELRDREKRLKALEEELERKARQALVDHYSKLSAEAARREQKALWRIQRHRLESARLRFLLEDQKCIQEMLRDMEAQQPQEPPSVFPSTGSQVTSTGPEHAGEGHSCDPGFTELHWGCPSLPCASTPSVPKSATEGADDSGAGPFSTGLSITDFLPVDSGEEQPVENTGVPFLEVALQTICSDLSPVAPEPAALTAGGPQATQSEYDFNTILRPAMATSLSPGPFQDVQNSVDSDKQHLLGDMSTKVDSYIHDMQETLPCPHPLSHATPVEGSLQPVGQLLEHMSETTVSTESHASGMAPCQQLSISRHVSDANIKVGDYMSDVALPRPRWNVHGHVSEASIGVGENMAEVAPSRPRWNVHGHVSDASIKIGENMSDVAPSRTRWNIHGHVSDASIKVGENVSDVTPSRPRWNVHGHVSEASIKVGENVSDVTPSRPRWNVHGHVSEASIKVGENVSDVTPSRPRWNVHGHVSDASIRIGENVSDTDLDLQQRGCAQPPLILEEPLPEAEADLKPHQCPPAHVSEAVLGVEAQSPALECGPQLPEKTKPTVCSGFGRTEEGSLQTKTLVAEPSMLGSGIPEEKGPGKSRDAEDLSPCLPSSSQEDTAVPSSPGPSDEVSNTEAEARRWGKEQAYLTDLTKLYHLEQYPDSYDSMSEPPVAHLVHHMLPRAFAFPVDPQVQSAVDESAVQLSELLTLPVLMKRSLMAPLAAHVSLVSKAAVDYFFVELHLETHFEALRHFLLMEDGEFAQSLSDLLFEKLGAGQTPGELLNPLVLNSILSKALQYSLHGDTPHASNLSFALKYLPEVFAPNAPDVLSCLELRYKVDWPLNIVITESCLNKYSGIFSFLLQLKLMMWTLKDICFHLKRTALVSHTAGSVQFRQLQLFKHEMQHFVKVIQGYIANQILHVSWCEFRARLAVVGDLEEIQRAHAEYLHRAVFRGLLTEKAAPVMNIIHSIFSLVLKFRSQLISQNWGPATGPRGAEHPNFPLMQQSYSTFKYYSHFLFKVVTKLVNRGYQPHLEDFLLRINFNNYYQDS.

Disordered regions lie at residues 809 to 842, 859 to 881, and 1284 to 1360; these read EAQQ…HSCD, STPS…PFST, and TVCS…AEAR. A compositionally biased stretch (polar residues) spans 820–831; sequence FPSTGSQVTSTG. Over residues 1314 to 1326 the composition is skewed to basic and acidic residues; that stretch reads PEEKGPGKSRDAE. The segment covering 1332–1343 has biased composition (polar residues); it reads LPSSSQEDTAVP.

Belongs to the TUBGCP family. Component of the gamma-tubulin ring complex (gTuRC) consisting of TUBGCP2, TUBGCP3, TUBGCP4, TUBGCP5 and TUBGCP6 and gamma-tubulin TUBG1 or TUBG2. TUBGCP2, TUBGCP3, TUBGCP4, TUBGCP5 and TUBGCP6 assemble in a 5:5:2:1:1 stoichiometry; each is associated with a gamma-tubulin, thereby arranging 14 gamma-tubulins in a helical manner. Gamma-tubulin at the first position is blocked by TUBGCP3 at the last position, allowing 13 protafilaments to grow into a microtubule. The gTuRC (via TUBGCP3 and TUBGCP6) interacts with ACTB and MZT1; the interactions form a luminal bridge that stabilizes the initial structure during complex assembly. The gTuRC (via TUBGCP2) interacts with MZT2A/MZT2B and CDK5RAP2 (via CM1 motif); the interactions play a role in gTuRC activation.

It is found in the cytoplasm. The protein localises to the cytoskeleton. It localises to the microtubule organizing center. Its subcellular location is the centrosome. Its function is as follows. Component of the gamma-tubulin ring complex (gTuRC) which mediates microtubule nucleation. The gTuRC regulates the minus-end nucleation of alpha-beta tubulin heterodimers that grow into microtubule protafilaments, a critical step in centrosome duplication and spindle formation. This is Gamma-tubulin complex component 6 (Tubgcp6) from Mus musculus (Mouse).